The chain runs to 90 residues: Probable Fe(2+)-trafficking protein (90 aa).

This sequence belongs to the Fe(2+)-trafficking protein family.

In terms of biological role, could be a mediator in iron transactions between iron acquisition and iron-requiring processes, such as synthesis and/or repair of Fe-S clusters in biosynthetic enzymes. The polypeptide is Probable Fe(2+)-trafficking protein (Bordetella avium (strain 197N)).